Reading from the N-terminus, the 569-residue chain is Formate--tetrahydrofolate ligase (569 aa).

Residue 68 to 75 coordinates ATP; the sequence is TPAGEGKT.

Belongs to the formate--tetrahydrofolate ligase family.

It catalyses the reaction (6S)-5,6,7,8-tetrahydrofolate + formate + ATP = (6R)-10-formyltetrahydrofolate + ADP + phosphate. It functions in the pathway one-carbon metabolism; tetrahydrofolate interconversion. This is Formate--tetrahydrofolate ligase from Psychrobacter sp. (strain PRwf-1).